Here is a 1044-residue protein sequence, read N- to C-terminus: Translation initiation factor IF-2 (1044 aa).

Residues 55-458 (EAQEGQGAGK…KRKASAQERR (404 aa)) form a disordered region. Over residues 57–77 (QEGQGAGKSAAKSAKPAAQPK) the composition is skewed to low complexity. The span at 104–146 (LSEKRERRPLTERRPLAERRPLAERPLVDRPVTERPLAERPAA) shows a compositional bias: basic and acidic residues. Composition is skewed to low complexity over residues 147–168 (ELRPGAAKAAAPARPAAEAQPV), 190–231 (KAQP…QKPA), and 254–265 (ASSRPASAAPAA). Residues 267–281 (GEKRPAAAAERREEP) are compositionally biased toward basic and acidic residues. Composition is skewed to low complexity over residues 352–375 (AAGQGTAARAGGLGLPQKPKAGAP) and 383–395 (APQRPGRRGAPLA). Basic and acidic residues predominate over residues 399–444 (LDPKVAEQAKAGEGKPRYGQSGDKRRADLYDRREHPSSQPSEEKLF). The region spanning 546-714 (PRHPVVTIMG…ILVLAEVSDL (169 aa)) is the tr-type G domain. The G1 stretch occupies residues 555 to 562 (GHVDHGKT). 555–562 (GHVDHGKT) lines the GTP pocket. Positions 580-584 (GITQH) are G2. The interval 601–604 (DTPG) is G3. Residues 601–605 (DTPGH) and 655–658 (NKID) each bind GTP. Residues 655–658 (NKID) form a G4 region. Residues 691–693 (SAK) form a G5 region.

The protein belongs to the TRAFAC class translation factor GTPase superfamily. Classic translation factor GTPase family. IF-2 subfamily.

It is found in the cytoplasm. In terms of biological role, one of the essential components for the initiation of protein synthesis. Protects formylmethionyl-tRNA from spontaneous hydrolysis and promotes its binding to the 30S ribosomal subunits. Also involved in the hydrolysis of GTP during the formation of the 70S ribosomal complex. The polypeptide is Translation initiation factor IF-2 (Symbiobacterium thermophilum (strain DSM 24528 / JCM 14929 / IAM 14863 / T)).